The primary structure comprises 138 residues: Nucleoside diphosphate kinase (138 aa).

ATP-binding residues include lysine 9, phenylalanine 57, arginine 85, threonine 91, arginine 102, and asparagine 112. Histidine 115 acts as the Pros-phosphohistidine intermediate in catalysis.

This sequence belongs to the NDK family. It depends on Mg(2+) as a cofactor.

Its subcellular location is the cytoplasm. The enzyme catalyses a 2'-deoxyribonucleoside 5'-diphosphate + ATP = a 2'-deoxyribonucleoside 5'-triphosphate + ADP. The catalysed reaction is a ribonucleoside 5'-diphosphate + ATP = a ribonucleoside 5'-triphosphate + ADP. In terms of biological role, major role in the synthesis of nucleoside triphosphates other than ATP. The ATP gamma phosphate is transferred to the NDP beta phosphate via a ping-pong mechanism, using a phosphorylated active-site intermediate. The polypeptide is Nucleoside diphosphate kinase (Picrophilus torridus (strain ATCC 700027 / DSM 9790 / JCM 10055 / NBRC 100828 / KAW 2/3)).